We begin with the raw amino-acid sequence, 403 residues long: Casein kinase II subunit alpha-2 (403 aa).

Positions 1–31 (MHLIFFFSYFLRRYLLLLCAILILRAPLAHS) are cleaved as a signal peptide. Residues 104-389 (YEVVRKVGRG…AKEAMAHPYF (286 aa)) form the Protein kinase domain. ATP contacts are provided by residues 110–118 (VGRGKYSEV) and Lys-133. N-linked (GlcNAc...) asparagine glycosylation occurs at Asn-182. The active-site Proton acceptor is the Asp-221.

Belongs to the protein kinase superfamily. Ser/Thr protein kinase family. CK2 subfamily. Heterotetramer of two catalytic alpha subunits and two regulatory beta subunits. In terms of tissue distribution, seems to be present in all plant organs. But seems to be more expressed than CKA1.

The protein resides in the nucleus. The protein localises to the nucleolus. The catalysed reaction is L-seryl-[protein] + ATP = O-phospho-L-seryl-[protein] + ADP + H(+). It catalyses the reaction L-threonyl-[protein] + ATP = O-phospho-L-threonyl-[protein] + ADP + H(+). Functionally, casein kinases are operationally defined by their preferential utilization of acidic proteins such as caseins as substrates. The alpha chain contains the catalytic site. The tetrameric holoenzyme CK2, composed of two alpha and two beta subunits, phosphorylates the transcription factor PIF1 after an exposure to light, resulting in a proteasome-dependent degradation of PIF1 and promotion of photomorphogenesis. CK2 phosphorylates translation initiation factors. May participate in the regulation of the initiation of translation. Acts as circadian clock component that maintains the correct period length through phosphorylation of CCA1. May act as an ectokinase that phosphorylates several extracellular proteins. The sequence is that of Casein kinase II subunit alpha-2 from Arabidopsis thaliana (Mouse-ear cress).